The primary structure comprises 144 residues: uncharacterized protein (144 aa).

Residues 23 to 82 adopt a coiled-coil conformation; that stretch reads EELYKKLENNLRKIETSYLDSKHCQDFKRKIEYYKIVPLISETKEIIKVLIQKIETLEIK.

This is an uncharacterized protein from Acanthamoeba polyphaga mimivirus (APMV).